A 101-amino-acid chain; its full sequence is Protein PIP-1 (101 aa).

An N-terminal signal peptide occupies residues 1–23 (MGKCLLLPLLLVVLSSLLGFPQA). Positions 24–101 (LECFQCQRVS…CHDSPFCNKF (78 aa)) constitute a UPAR/Ly6 domain. 5 disulfides stabilise this stretch: Cys26–Cys53, Cys29–Cys38, Cys45–Cys71, Cys75–Cys91, and Cys92–Cys98. The N-linked (GlcNAc...) asparagine glycan is linked to Asn84.

The protein resides in the secreted. The chain is Protein PIP-1 from Sus scrofa (Pig).